The primary structure comprises 486 residues: Palmitoleoyl-protein carboxylesterase notum2 (486 aa).

The N-terminal stretch at 1–18 (MRILEIFAILLILKEVRP) is a signal peptide. N-linked (GlcNAc...) asparagine glycosylation is present at N183. Residues S223, D331, and H380 each act as charge relay system in the active site.

The protein belongs to the pectinacetylesterase family. Notum subfamily.

It is found in the secreted. The enzyme catalyses [Wnt protein]-O-(9Z)-hexadecenoyl-L-serine + H2O = [Wnt protein]-L-serine + (9Z)-hexadecenoate + H(+). Functionally, carboxylesterase that acts as a key negative regulator of the Wnt signaling pathway by specifically mediating depalmitoleoylation of WNT proteins. Serine palmitoleoylation of WNT proteins is required for efficient binding to frizzled receptors. In Xenopus laevis (African clawed frog), this protein is Palmitoleoyl-protein carboxylesterase notum2.